Consider the following 112-residue polypeptide: Integration host factor subunit alpha (112 aa).

This sequence belongs to the bacterial histone-like protein family. As to quaternary structure, heterodimer of an alpha and a beta chain.

This protein is one of the two subunits of integration host factor, a specific DNA-binding protein that functions in genetic recombination as well as in transcriptional and translational control. This Rhizobium johnstonii (strain DSM 114642 / LMG 32736 / 3841) (Rhizobium leguminosarum bv. viciae) protein is Integration host factor subunit alpha.